Here is a 142-residue protein sequence, read N- to C-terminus: Hemoglobin subunit alpha (142 aa).

The Globin domain maps to 2 to 142 (VLSSQNKKAI…VAYELSSCYR (141 aa)). An O2-binding site is contributed by histidine 60. Heme b is bound at residue histidine 89.

Belongs to the globin family. In terms of assembly, heterotetramer of two alpha chains and two beta chains. Red blood cells.

In terms of biological role, involved in oxygen transport from gills to the various peripheral tissues. The sequence is that of Hemoglobin subunit alpha (hba) from Hemitrygon akajei (Red stingray).